A 131-amino-acid polypeptide reads, in one-letter code: uncharacterized protein (131 aa).

The interval 60–100 (GRHTLSQVPNKGHEKASAVQLPEKQGTDQSRRGPTSAVTKA) is disordered. Over residues 91–100 (RGPTSAVTKA) the composition is skewed to polar residues.

This is an uncharacterized protein from Homo sapiens (Human).